Reading from the N-terminus, the 200-residue chain is MQLNVNGAQAIEVSDATFGGEFNETLVHQAVVAYMAGGRQGTKGQKSRSDVSGGGKRPWRQKGTGRARAGTTRGPIWRGGGVTFAASTRNHDQKLNKKMYRAALRSILAELVRTDRLVVVEDFAVEAPKTKALLSKLNGLGLNDVLIVSDAVDQNLYLAARNLPHVDVRDVQGSDPVSLIAYEKVLVTVSAVKKFEELLG.

The interval 38-73 (GRQGTKGQKSRSDVSGGGKRPWRQKGTGRARAGTTR) is disordered.

The protein belongs to the universal ribosomal protein uL4 family. Part of the 50S ribosomal subunit.

One of the primary rRNA binding proteins, this protein initially binds near the 5'-end of the 23S rRNA. It is important during the early stages of 50S assembly. It makes multiple contacts with different domains of the 23S rRNA in the assembled 50S subunit and ribosome. Its function is as follows. Forms part of the polypeptide exit tunnel. The sequence is that of Large ribosomal subunit protein uL4 from Ectopseudomonas mendocina (strain ymp) (Pseudomonas mendocina).